The following is a 312-amino-acid chain: Ribonuclease Z (312 aa).

7 residues coordinate Zn(2+): His62, His64, Asp66, His67, His144, Asp215, and His273. Asp66 acts as the Proton acceptor in catalysis.

Belongs to the RNase Z family. Homodimer. Zn(2+) is required as a cofactor.

It carries out the reaction Endonucleolytic cleavage of RNA, removing extra 3' nucleotides from tRNA precursor, generating 3' termini of tRNAs. A 3'-hydroxy group is left at the tRNA terminus and a 5'-phosphoryl group is left at the trailer molecule.. In terms of biological role, zinc phosphodiesterase, which displays some tRNA 3'-processing endonuclease activity. Probably involved in tRNA maturation, by removing a 3'-trailer from precursor tRNA. This chain is Ribonuclease Z, found in Prochlorococcus marinus (strain MIT 9215).